The sequence spans 272 residues: MARLGAFDMDGTLLMPDHQLGEATQMALHRLHQRGVTLAFATGRHLLEMRQMLQKIALEAFLITGNGTRIHAPSGELLFAEDLSPQVAEAVLHGYWDTSASLHVFNDSGWLTDNDDPALLDAHAWSGFRYQLTDLKRLPAHQVTKICFVADHDALCELRVKLCQTLGSQAHICFSALDCLEVLPPGCNKGAALQALSQHLGITMADCMAFGDAMNDREMLSLAGKGLIMGNAMPQLLAELPHLPVIGHCSRQAVAHYLTHWLDHPHLDYSPE.

Residue Asp-8 is the Nucleophile of the active site. Mg(2+) is bound by residues Asp-8, Asp-10, and Asp-212.

Belongs to the HAD-like hydrolase superfamily. Cof family. Mg(2+) serves as cofactor.

The catalysed reaction is 4-amino-2-methyl-5-(diphosphooxymethyl)pyrimidine + H2O = 4-amino-2-methyl-5-(phosphooxymethyl)pyrimidine + phosphate + H(+). Catalyzes the hydrolysis of 4-amino-2-methyl-5-hydroxymethylpyrimidine pyrophosphate (HMP-PP) to 4-amino-2-methyl-5-hydroxymethylpyrimidine phosphate (HMP-P). The sequence is that of HMP-PP phosphatase from Cronobacter sakazakii (strain ATCC BAA-894) (Enterobacter sakazakii).